The following is a 383-amino-acid chain: Acetylornithine deacetylase (383 aa).

His-80 is a binding site for Zn(2+). Asp-82 is an active-site residue. Residue Asp-112 coordinates Zn(2+). The active site involves Glu-144. Positions 145, 169, and 355 each coordinate Zn(2+).

It belongs to the peptidase M20A family. ArgE subfamily. As to quaternary structure, homodimer. The cofactor is Zn(2+). It depends on Co(2+) as a cofactor. Requires glutathione as cofactor.

The protein resides in the cytoplasm. The enzyme catalyses N(2)-acetyl-L-ornithine + H2O = L-ornithine + acetate. It participates in amino-acid biosynthesis; L-arginine biosynthesis; L-ornithine from N(2)-acetyl-L-ornithine (linear): step 1/1. Catalyzes the hydrolysis of the amide bond of N(2)-acetylated L-amino acids. Cleaves the acetyl group from N-acetyl-L-ornithine to form L-ornithine, an intermediate in L-arginine biosynthesis pathway, and a branchpoint in the synthesis of polyamines. In Escherichia coli O157:H7, this protein is Acetylornithine deacetylase.